We begin with the raw amino-acid sequence, 662 residues long: Intracellular exo-alpha-(1-&gt;5)-L-arabinofuranosidase (662 aa).

Alpha-L-arabinofuranose contacts are provided by Glu27, Asn72, and Asn174. Catalysis depends on Glu175, which acts as the Proton donor/acceptor. 3 residues coordinate alpha-L-arabinofuranose: Tyr246, Glu294, and Gln352. Glu294 serves as the catalytic Nucleophile. 3 disordered regions span residues 454–483 (LADADPDARNTLAEPERVVPHPVDGTSLRD), 497–548 (SIRC…RTAR), and 588–662 (WTRW…ARRC). Residues 519–533 (TGTPPAAPPSSSSAP) are compositionally biased toward low complexity. Basic and acidic residues predominate over residues 537–547 (PTARRSPDRTA). 3 stretches are compositionally biased toward low complexity: residues 590–603 (RWAPAPRSGSPSRR), 628–641 (RRSPPGSAPGTPAP), and 649–662 (AGASRGAPRTARRC).

This sequence belongs to the glycosyl hydrolase 51 family. In terms of assembly, homohexamer; trimer of dimers.

It localises to the cytoplasm. The catalysed reaction is Hydrolysis of terminal non-reducing alpha-L-arabinofuranoside residues in alpha-L-arabinosides.. It functions in the pathway glycan metabolism; L-arabinan degradation. Involved in the degradation of arabinan and is a key enzyme in the complete degradation of the plant cell wall. Catalyzes the cleavage of terminal alpha-(1-&gt;5)-arabinofuranosyl bonds in different hemicellulosic homopolysaccharides (arabino-oligoxylosides, branched and debranched arabinans). It acts rapidly on the short-chain arabino-oligoxylosides from digestion of xylan with xylanases. It hydrolyzes slowly arabinan and arabinoxylan from wheat and rye flour. The chain is Intracellular exo-alpha-(1-&gt;5)-L-arabinofuranosidase from Streptomyces lividans.